The chain runs to 378 residues: MHEVSDKTNAIHPLQRVSRALFALGLLCFAAMAGAERIKDIATVEGVRSNQIVGYGLVVGLDGTGDKAPFTDQTFRNMMNRFGITIPAGTDPKLKNVAAVSVHADLPAFSKPGQKIDITVSSVGNAKSLRGGSLLMTNLKGADGKTYAVAQGNLVVGGFGAGGADGSSITVNVPSVGRIPNGATVERAVPSSFSHGDTLTLNLSSPDFTTAKRVQDRINDLLGPGLAQAVDAASIRVMAPREASQRVGFLSILENLEVEPGQEAAKIVINSRTGTIVVGQNVKVLPAAVTHGNLTVTITEDFGVSQPNALAGGDTVVVPQTDVNVEQEPSRMFKFGPAATLNDIVRAVNQVGAAPGDVMAVLEALKQAGALKAELIVI.

Residues methionine 1–alanine 33 form the signal peptide.

Belongs to the FlgI family. In terms of assembly, the basal body constitutes a major portion of the flagellar organelle and consists of four rings (L,P,S, and M) mounted on a central rod.

It is found in the periplasm. Its subcellular location is the bacterial flagellum basal body. In terms of biological role, assembles around the rod to form the L-ring and probably protects the motor/basal body from shearing forces during rotation. In Hahella chejuensis (strain KCTC 2396), this protein is Flagellar P-ring protein 2.